We begin with the raw amino-acid sequence, 296 residues long: Acetylglutamate kinase (296 aa).

Substrate-binding positions include 67–68 (GG), arginine 89, and asparagine 194.

The protein belongs to the acetylglutamate kinase family. ArgB subfamily.

Its subcellular location is the cytoplasm. The enzyme catalyses N-acetyl-L-glutamate + ATP = N-acetyl-L-glutamyl 5-phosphate + ADP. The protein operates within amino-acid biosynthesis; L-arginine biosynthesis; N(2)-acetyl-L-ornithine from L-glutamate: step 2/4. In terms of biological role, catalyzes the ATP-dependent phosphorylation of N-acetyl-L-glutamate. The chain is Acetylglutamate kinase from Brucella abortus (strain S19).